A 641-amino-acid chain; its full sequence is Threonine--tRNA ligase (641 aa).

The region spanning 1–61 (MIKINLLNHQ…TQDGDLEILA (61 aa)) is the TGS domain. A catalytic region spans residues 240-538 (DHKRLNKKLD…LIEENKGVFP (299 aa)). Zn(2+)-binding residues include cysteine 334, histidine 385, and histidine 515.

Belongs to the class-II aminoacyl-tRNA synthetase family. In terms of assembly, homodimer. It depends on Zn(2+) as a cofactor.

The protein resides in the cytoplasm. It catalyses the reaction tRNA(Thr) + L-threonine + ATP = L-threonyl-tRNA(Thr) + AMP + diphosphate + H(+). Catalyzes the attachment of threonine to tRNA(Thr) in a two-step reaction: L-threonine is first activated by ATP to form Thr-AMP and then transferred to the acceptor end of tRNA(Thr). Also edits incorrectly charged L-seryl-tRNA(Thr). This is Threonine--tRNA ligase from Phytoplasma australiense.